A 122-amino-acid polypeptide reads, in one-letter code: Basic phospholipase A2 vipoxin B chain (122 aa).

Cystine bridges form between cysteine 26–cysteine 115, cysteine 28–cysteine 44, cysteine 43–cysteine 95, cysteine 49–cysteine 122, cysteine 50–cysteine 88, cysteine 57–cysteine 81, and cysteine 75–cysteine 86. Residues tyrosine 27, glycine 29, and glycine 31 each coordinate Ca(2+). Residue histidine 47 is part of the active site. Aspartate 48 is a Ca(2+) binding site. The active site involves aspartate 89.

This sequence belongs to the phospholipase A2 family. Group II subfamily. D49 sub-subfamily. Heterodimer of A (AC P04084) and B chains; non-covalently linked. The A chain (acidic) is non-toxic, and increases the toxicity of the B chain (basic). The A chain may act as factor stabilizing the complex structure and hence retaining its toxicity by preventing non-specific binding. Upon binding to the target membranes the A chain is postulated to dissociate. The cofactor is Ca(2+). In terms of tissue distribution, expressed by the venom gland.

It localises to the secreted. It carries out the reaction a 1,2-diacyl-sn-glycero-3-phosphocholine + H2O = a 1-acyl-sn-glycero-3-phosphocholine + a fatty acid + H(+). In terms of biological role, heterodimer: postsynaptic neurotoxin. Functionally, monomer: snake venom phospholipase A2 (PLA2) that shows hemolytic activity and inhibition of platelet aggregation. The hemolytic activity occurs only in presence of fatty acids (unsaturated fatty acids facilitate induce a strong hemolytic activity, whereas saturated fatty acids induce a slight activity). The inhibition of platelet aggregation is almost maximal when aggregation is induced by collagen, and arachidonic acid, whereas it is only of 30% when the aggregation is induced by ADP. PLA2 catalyzes the calcium-dependent hydrolysis of the 2-acyl groups in 3-sn-phosphoglycerides. This Vipera ammodytes meridionalis (Eastern sand viper) protein is Basic phospholipase A2 vipoxin B chain.